Reading from the N-terminus, the 256-residue chain is Type III pantothenate kinase (256 aa).

6 to 13 lines the ATP pocket; it reads DVGNSNIV. Substrate-binding positions include Y100 and 107–110; that span reads GADR. The active-site Proton acceptor is D109. Residue D129 coordinates K(+). T132 serves as a coordination point for ATP. A substrate-binding site is contributed by T184.

The protein belongs to the type III pantothenate kinase family. Homodimer. Requires NH4(+) as cofactor. K(+) serves as cofactor.

It is found in the cytoplasm. It carries out the reaction (R)-pantothenate + ATP = (R)-4'-phosphopantothenate + ADP + H(+). It participates in cofactor biosynthesis; coenzyme A biosynthesis; CoA from (R)-pantothenate: step 1/5. Its function is as follows. Catalyzes the phosphorylation of pantothenate (Pan), the first step in CoA biosynthesis. This chain is Type III pantothenate kinase, found in Geotalea daltonii (strain DSM 22248 / JCM 15807 / FRC-32) (Geobacter daltonii).